The sequence spans 507 residues: Pre-glycoprotein polyprotein GP complex (507 aa).

A lipid anchor (N-myristoyl glycine; by host) is attached at Gly2. At 2–17 (GQVVTFLQSLPEVINE) the chain is on the extracellular side. Residues 18 to 33 (AINIALIAISIICILK) traverse the membrane as a helical segment. Residues 34–58 (GLVNFWKCGVVQLAIFLCLAGRKCD) lie on the Cytoplasmic side of the membrane. Cys57 serves as a coordination point for Zn(2+). At 59–445 (GLMIDRRHEL…QGKTPIALTD (387 aa)) the chain is on the extracellular side. Disulfide bonds link Cys86/Cys247, Cys292/Cys305, Cys314/Cys323, and Cys377/Cys398. Asn89, Asn111, Asn179, and Asn240 each carry an N-linked (GlcNAc...) asparagine; by host glycan. Residues Asn378, Asn386, Asn403, and Asn408 are each glycosylated (N-linked (GlcNAc...) asparagine; by host). A helical transmembrane segment spans residues 446 to 466 (ICFWSLVFFTSTVFLQLVGIP). Residues 467-507 (THRHLVGEGCPKPHRITSNSLCACGYYKIPKRPTRWVRKGK) lie on the Cytoplasmic side of the membrane. Zn(2+) is bound by residues His468, His470, Cys476, His480, Cys488, and Cys490.

This sequence belongs to the arenaviridae GPC protein family. Interacts with glycoprotein G2. Part of the GP complex (GP-C) together with glycoprotein G1 and glycoprotein G2. The GP-complex interacts with protein Z, which interacts with ribonucleocapsid; these interactions may induce virion budding. As to quaternary structure, homotrimer; disulfide-linked. In pre-fusion state, G1 homotrimers bind G2 homotrimers via ionic interactions. Part of the GP complex (GP-C) together with glycoprotein G2 and the stable signal peptide. The GP-complex interacts with protein Z, which interacts with ribonucleocapsid; these interactions may induce virion budding. In terms of assembly, homotrimer. Interacts with the stable signal peptide. In pre-fusion state, G2 homotrimers bind G1 homotrimers via ionic interactions. Part of the GP complex (GP-C) together with glycoprotein G1 and the stable signal peptide. Acidification in the endosome triggers rearrangements, which ultimately leads to a 6 helix bundle formed by the two heptad repeat domains (HR1 and HR2) in post-fusion state. The GP-complex interacts with protein Z, which interacts with ribonucleocapsid; these interactions may induce virion budding. Post-translationally, specific enzymatic cleavages in vivo yield mature proteins. GP-C polyprotein is cleaved in the endoplasmic reticulum by the host protease MBTPS1. Only cleaved glycoprotein is incorporated into virions. In terms of processing, the SSP remains stably associated with the GP complex following cleavage by signal peptidase and plays crucial roles in the trafficking of GP through the secretory pathway. Myristoylation is necessary for GP2-mediated fusion activity.

Its subcellular location is the virion membrane. The protein localises to the host endoplasmic reticulum membrane. The protein resides in the host Golgi apparatus membrane. It localises to the host cell membrane. In terms of biological role, functions as a cleaved signal peptide that is retained as the third component of the GP complex (GP-C). Helps to stabilize the spike complex in its native conformation. The SSP is required for efficient glycoprotein expression, post-translational maturation cleavage of G1 and G2, glycoprotein transport to the cell surface plasma membrane, formation of infectious virus particles, and acid pH-dependent glycoprotein-mediated cell fusion. Its function is as follows. Forms the virion spikes together with glycoprotein G2. The glycoprotein spike trimers are connected to the underlying matrix. Interacts with the host receptor leading to virus endocytosis. Functionally, forms the virion spikes together with glycoprotein G1. The glycoprotein spike trimers are connected to the underlying matrix. Class I viral fusion protein that directs fusion of viral and host endosomal membranes, leading to delivery of the nucleocapsid into the cytoplasm. Membrane fusion is mediated by irreversible conformational changes induced by acidification. The sequence is that of Pre-glycoprotein polyprotein GP complex from Allpahuayo mammarenavirus (isolate Rat/Peru/CLHP-2472/1997) (ALLV).